Reading from the N-terminus, the 103-residue chain is Small ribosomal subunit protein uS10 (103 aa).

The protein belongs to the universal ribosomal protein uS10 family. In terms of assembly, part of the 30S ribosomal subunit.

Functionally, involved in the binding of tRNA to the ribosomes. This is Small ribosomal subunit protein uS10 from Vibrio cholerae serotype O1 (strain ATCC 39541 / Classical Ogawa 395 / O395).